Reading from the N-terminus, the 312-residue chain is DNA primase small subunit PriS (312 aa).

Residues aspartate 88, aspartate 90, and aspartate 215 contribute to the active site.

This sequence belongs to the eukaryotic-type primase small subunit family. As to quaternary structure, heterodimer of a small subunit (PriS) and a large subunit (PriL). Mg(2+) is required as a cofactor. Requires Mn(2+) as cofactor.

Its function is as follows. Catalytic subunit of DNA primase, an RNA polymerase that catalyzes the synthesis of short RNA molecules used as primers for DNA polymerase during DNA replication. The small subunit contains the primase catalytic core and has DNA synthesis activity on its own. Binding to the large subunit stabilizes and modulates the activity, increasing the rate of DNA synthesis while decreasing the length of the DNA fragments, and conferring RNA synthesis capability. The DNA polymerase activity may enable DNA primase to also catalyze primer extension after primer synthesis. May also play a role in DNA repair. The sequence is that of DNA primase small subunit PriS from Pyrobaculum islandicum (strain DSM 4184 / JCM 9189 / GEO3).